The chain runs to 188 residues: Putative CC-type chemokine FPV060 (188 aa).

The protein belongs to the intercrine beta (chemokine CC) family. Highly divergent.

The protein is Putative CC-type chemokine FPV060 of Fowlpox virus (strain NVSL) (FPV).